A 160-amino-acid polypeptide reads, in one-letter code: Putative pre-16S rRNA nuclease (160 aa).

This sequence belongs to the YqgF nuclease family.

The protein localises to the cytoplasm. Could be a nuclease involved in processing of the 5'-end of pre-16S rRNA. The sequence is that of Putative pre-16S rRNA nuclease from Cereibacter sphaeroides (strain KD131 / KCTC 12085) (Rhodobacter sphaeroides).